Here is a 527-residue protein sequence, read N- to C-terminus: GMP synthase [glutamine-hydrolyzing] (527 aa).

The region spanning 19 to 212 is the Glutamine amidotransferase type-1 domain; the sequence is KIIVLDYGSQ…AFSICGAKGD (194 aa). Catalysis depends on C96, which acts as the Nucleophile. Residues H186 and E188 contribute to the active site. The GMPS ATP-PPase domain maps to 213–402; it reads WSMANFVDMQ…LGMPDEVVWR (190 aa). 240–246 contacts ATP; the sequence is SGGVDSS.

Homodimer.

It catalyses the reaction XMP + L-glutamine + ATP + H2O = GMP + L-glutamate + AMP + diphosphate + 2 H(+). The protein operates within purine metabolism; GMP biosynthesis; GMP from XMP (L-Gln route): step 1/1. Functionally, catalyzes the synthesis of GMP from XMP. In Streptococcus thermophilus (strain CNRZ 1066), this protein is GMP synthase [glutamine-hydrolyzing].